We begin with the raw amino-acid sequence, 173 residues long: Large ribosomal subunit protein uL10 (173 aa).

The protein belongs to the universal ribosomal protein uL10 family. In terms of assembly, part of the ribosomal stalk of the 50S ribosomal subunit. The N-terminus interacts with L11 and the large rRNA to form the base of the stalk. The C-terminus forms an elongated spine to which L12 dimers bind in a sequential fashion forming a multimeric L10(L12)X complex.

Functionally, forms part of the ribosomal stalk, playing a central role in the interaction of the ribosome with GTP-bound translation factors. This chain is Large ribosomal subunit protein uL10, found in Nitratidesulfovibrio vulgaris (strain ATCC 29579 / DSM 644 / CCUG 34227 / NCIMB 8303 / VKM B-1760 / Hildenborough) (Desulfovibrio vulgaris).